Here is a 353-residue protein sequence, read N- to C-terminus: UDP-N-acetylglucosamine--N-acetylmuramyl-(pentapeptide) pyrophosphoryl-undecaprenol N-acetylglucosamine transferase (353 aa).

Residues 10 to 12 (TGG), asparagine 124, serine 183, and glutamine 283 each bind UDP-N-acetyl-alpha-D-glucosamine.

Belongs to the glycosyltransferase 28 family. MurG subfamily.

The protein localises to the cell inner membrane. It catalyses the reaction di-trans,octa-cis-undecaprenyl diphospho-N-acetyl-alpha-D-muramoyl-L-alanyl-D-glutamyl-meso-2,6-diaminopimeloyl-D-alanyl-D-alanine + UDP-N-acetyl-alpha-D-glucosamine = di-trans,octa-cis-undecaprenyl diphospho-[N-acetyl-alpha-D-glucosaminyl-(1-&gt;4)]-N-acetyl-alpha-D-muramoyl-L-alanyl-D-glutamyl-meso-2,6-diaminopimeloyl-D-alanyl-D-alanine + UDP + H(+). It participates in cell wall biogenesis; peptidoglycan biosynthesis. In terms of biological role, cell wall formation. Catalyzes the transfer of a GlcNAc subunit on undecaprenyl-pyrophosphoryl-MurNAc-pentapeptide (lipid intermediate I) to form undecaprenyl-pyrophosphoryl-MurNAc-(pentapeptide)GlcNAc (lipid intermediate II). This chain is UDP-N-acetylglucosamine--N-acetylmuramyl-(pentapeptide) pyrophosphoryl-undecaprenol N-acetylglucosamine transferase, found in Helicobacter pylori (strain P12).